Reading from the N-terminus, the 470-residue chain is MKNPLWGGRFTVSPSDIMKKINESISFDKILYEEDISGSIAHCKMLVNQKIISKYEGQLIIHGLEVIQNQISSGTFEFSTDLEDIHMNIEHHLKKMIGNIAGKLHTARSRNDQVATDFKLWIRKSIVKLETLLHELQQTILNIAEANYDTIMPGFTHLQIAQPVTLGHHLMAYFEMLKRDCSRWQDLHKRMNQCPAGSAALAGTSFPIDRHFIAQELKFDSPTENSIDAVSDRDYVIEFLSNASICIMHLSRLAEEIILWCSYNFKFITLSDNITTGSSIMPQKKNPDAAELIRGKTGRIFASLNQILVVMKGLPLAYSKDMQEDKEPVFDAANNLMLCIEAMNSMLNNITINKSNMLKAAEHDYSTATDLADWLVKNLNLSFRESHETTGQIVKLAEQNHCKLHELTLEQMKTIIPSITEDVFSILSVKNSVDSRTSYGGTAPANVIEAIKRGKLYLSNITTLHSENNM.

This sequence belongs to the lyase 1 family. Argininosuccinate lyase subfamily.

The protein localises to the cytoplasm. It carries out the reaction 2-(N(omega)-L-arginino)succinate = fumarate + L-arginine. It participates in amino-acid biosynthesis; L-arginine biosynthesis; L-arginine from L-ornithine and carbamoyl phosphate: step 3/3. The polypeptide is Argininosuccinate lyase (Ehrlichia chaffeensis (strain ATCC CRL-10679 / Arkansas)).